A 297-amino-acid chain; its full sequence is Protoheme IX farnesyltransferase (297 aa).

Helical transmembrane passes span 16-36, 45-65, 93-113, 114-134, 141-161, 172-192, 223-243, 244-264, and 277-297; these read VVALIVFTALVGMVLAIPGVP, VLGFLGIWLAASAAAAINQLL, VFASVLIVLSMVILVLWVNLI, TAVLTFASLIGYAVIYTVYLK, IVIGGLAGAMPPMLGWAAVTG, SLLVLIIFIWTPPHFWALAIF, VVLALVCLLPYLVGMSGAFYL, GGAIVLNAVFLWYAWRMLDPP, and IVYLMALFAFLLVDHWILPWL.

The protein belongs to the UbiA prenyltransferase family. Protoheme IX farnesyltransferase subfamily.

The protein resides in the cell inner membrane. The enzyme catalyses heme b + (2E,6E)-farnesyl diphosphate + H2O = Fe(II)-heme o + diphosphate. Its pathway is porphyrin-containing compound metabolism; heme O biosynthesis; heme O from protoheme: step 1/1. Its function is as follows. Converts heme B (protoheme IX) to heme O by substitution of the vinyl group on carbon 2 of heme B porphyrin ring with a hydroxyethyl farnesyl side group. In Stenotrophomonas maltophilia (strain R551-3), this protein is Protoheme IX farnesyltransferase.